Here is a 1257-residue protein sequence, read N- to C-terminus: Phosphatidylinositol 3,4,5-trisphosphate 5-phosphatase 2 (1257 aa).

Residues 21-117 (WYHRDLSRAA…GLVCALLLPV (97 aa)) form the SH2 domain. The segment covering 119 to 132 (GEREPDPPDDRDAS) has biased composition (basic and acidic residues). The disordered stretch occupies residues 119-181 (GEREPDPPDD…ESTPNGLSTV (63 aa)). Phosphoserine is present on Ser132. Residues 156–166 (PSSPLPAPETP) are compositionally biased toward pro residues. Thr165 is subject to Phosphothreonine. 2 positions are modified to phosphoserine: Ser241 and Ser353. Residue Tyr887 is modified to Phosphotyrosine. Ser891 bears the Phosphoserine mark. The tract at residues 897–986 (TGAKSKAPSV…PPKNSFNNPA (90 aa)) is disordered. Over residues 939-951 (PPPTGRPPAPPRA) the composition is skewed to pro residues. An SH3-binding motif is present at residues 945–950 (PPAPPR). A compositionally biased stretch (basic and acidic residues) spans 952 to 966 (VPREESLNPRLKSEG). The NPXY motif signature appears at 984–987 (NPAY). Tyr987 carries the phosphotyrosine modification. Residues 1004–1115 (SFARAPIPPT…PASTFLEEVA (112 aa)) are disordered. 2 stretches are compositionally biased toward pro residues: residues 1049–1060 (LPPPDFPPPPLP) and 1088–1104 (GPPP…PPGT). The residue at position 1132 (Ser1132) is a Phosphoserine. A phosphotyrosine mark is found at Tyr1136 and Tyr1161. The 63-residue stretch at 1195-1257 (LGEAGMGAWL…LLLDTLQLSK (63 aa)) folds into the SAM domain. Residue Ser1256 is modified to Phosphoserine.

It belongs to the inositol 1,4,5-trisphosphate 5-phosphatase family. In terms of assembly, interacts with tyrosine phosphorylated form of SHC1. Interacts with EGFR. Upon stimulation by the EGF signaling pathway, it forms a complex with SHC1 and EGFR. Interacts with cytoskeletal protein SORBS3/vinexin, promoting its localization to the periphery of cells. Forms a complex with filamin (FLNA or FLNB), actin, GPIb (GP1BA or GP1BB) that regulates cortical and submembraneous actin. Interacts with c-Met/MET, when c-Met/MET is phosphorylated on 'Tyr-1356'. Interacts with p130Cas/BCAR1. Interacts with CENTD3/ARAP3 via its SAM domain. Interacts with c-Cbl/CBL and CAP/SORBS1. Interacts with activated EPHA2 receptor. Interacts with receptors FCGR2A. Interacts with FCGR2B. Interacts with tyrosine kinase ABL1. Interacts with tyrosine kinase TEC. Interacts with CSF1R. Interacts (via N-terminus) with SH3YL1 (via SH3 domain). Interacts (via SH2 domain) with tyrosine phosphorylated KLRC1 (via ITIM). Interacts with NEDD9/HEF1. Post-translationally, tyrosine phosphorylated by the members of the SRC family after exposure to a diverse array of extracellular stimuli such as insulin, growth factors such as EGF or PDGF, chemokines, integrin ligands and hypertonic and oxidative stress. May be phosphorylated upon IgG receptor FCGR2B-binding. Phosphorylated at Tyr-987 following cell attachment and spreading. Phosphorylated at Tyr-1161 following EGF signaling pathway stimulation.

It is found in the cytoplasm. The protein localises to the cytosol. Its subcellular location is the cytoskeleton. It localises to the membrane. The protein resides in the cell projection. It is found in the filopodium. The protein localises to the lamellipodium. Its subcellular location is the basal cell membrane. It localises to the nucleus. The protein resides in the nucleus speckle. It is found in the spindle pole. The catalysed reaction is a 1,2-diacyl-sn-glycero-3-phospho-(1D-myo-inositol-3,4,5-trisphosphate) + H2O = a 1,2-diacyl-sn-glycero-3-phospho-(1D-myo-inositol-3,4-bisphosphate) + phosphate. The enzyme catalyses 1,2-dioctanoyl-sn-glycero-3-phospho-(1D-myo-inositol-3,4,5-trisphosphate) + H2O = 1,2-dioctanoyl-sn-glycero-3-phospho-(1D-myo-inositol-3,4-bisphosphate) + phosphate. It carries out the reaction 1,2-dihexadecanoyl-sn-glycero-3-phospho-(1D-myo-inositol-3,4,5-trisphosphate) + H2O = 1,2-dihexadecanoyl-sn-glycero-3-phospho-(1D-myo-inositol-3,4-bisphosphate) + phosphate. Activated upon translocation to the sites of synthesis of PtdIns(3,4,5)P3 in the membrane. Enzymatic activity is enhanced in the presence of phosphatidylserine. Functionally, phosphatidylinositol (PtdIns) phosphatase that specifically hydrolyzes the 5-phosphate of phosphatidylinositol-3,4,5-trisphosphate (PtdIns(3,4,5)P3) to produce PtdIns(3,4)P2, thereby negatively regulating the PI3K (phosphoinositide 3-kinase) pathways. Required for correct mitotic spindle orientation and therefore progression of mitosis. Plays a central role in regulation of PI3K-dependent insulin signaling, although the precise molecular mechanisms and signaling pathways remain unclear. While overexpression reduces both insulin-stimulated MAP kinase and Akt activation, its absence does not affect insulin signaling or GLUT4 trafficking. Confers resistance to dietary obesity. May act by regulating AKT2, but not AKT1, phosphorylation at the plasma membrane. Part of a signaling pathway that regulates actin cytoskeleton remodeling. Required for the maintenance and dynamic remodeling of actin structures as well as in endocytosis, having a major impact on ligand-induced EGFR internalization and degradation. Participates in regulation of cortical and submembraneous actin by hydrolyzing PtdIns(3,4,5)P3 thereby regulating membrane ruffling. Regulates cell adhesion and cell spreading. Required for HGF-mediated lamellipodium formation, cell scattering and spreading. Acts as a negative regulator of EPHA2 receptor endocytosis by inhibiting via PI3K-dependent Rac1 activation. Acts as a regulator of neuritogenesis by regulating PtdIns(3,4,5)P3 level and is required to form an initial protrusive pattern, and later, maintain proper neurite outgrowth. Acts as a negative regulator of the FC-gamma-RIIA receptor (FCGR2A). Mediates signaling from the FC-gamma-RIIB receptor (FCGR2B), playing a central role in terminating signal transduction from activating immune/hematopoietic cell receptor systems. Involved in EGF signaling pathway. Upon stimulation by EGF, it is recruited by EGFR and dephosphorylates PtdIns(3,4,5)P3. Plays a negative role in regulating the PI3K-PKB pathway, possibly by inhibiting PKB activity. Down-regulates Fc-gamma-R-mediated phagocytosis in macrophages independently of INPP5D/SHIP1. In macrophages, down-regulates NF-kappa-B-dependent gene transcription by regulating macrophage colony-stimulating factor (M-CSF)-induced signaling. Plays a role in the localization of AURKA and NEDD9/HEF1 to the basolateral membrane at interphase in polarized cysts, thereby mediates cell cycle homeostasis, cell polarization and cilia assembly. Additionally promotion of cilia growth is also facilitated by hydrolysis of (PtdIns(3,4,5)P3) to PtdIns(3,4)P2. Promotes formation of apical membrane-initiation sites during the initial stages of lumen formation via Rho family-induced actin filament organization and CTNNB1 localization to cell-cell contacts. May also hydrolyze PtdIns(1,3,4,5)P4, and could thus affect the levels of the higher inositol polyphosphates like InsP6. Involved in endochondral ossification. This is Phosphatidylinositol 3,4,5-trisphosphate 5-phosphatase 2 from Rattus norvegicus (Rat).